Here is a 732-residue protein sequence, read N- to C-terminus: Polyribonucleotide nucleotidyltransferase (732 aa).

Residues Asp515 and Asp521 each coordinate Mg(2+). The KH domain occupies 581–641 (PKLELFNVDP…KNVDAAKDYI (61 aa)). Positions 672 to 731 (GDEFTGSVKSVVDFGVFIELKDGVDGLLHISKIKSPLNVGDQVKVCVSEQKGNKISLSLV) constitute an S1 motif domain.

Belongs to the polyribonucleotide nucleotidyltransferase family. Mg(2+) is required as a cofactor.

Its subcellular location is the cytoplasm. The enzyme catalyses RNA(n+1) + phosphate = RNA(n) + a ribonucleoside 5'-diphosphate. Its function is as follows. Involved in mRNA degradation. Catalyzes the phosphorolysis of single-stranded polyribonucleotides processively in the 3'- to 5'-direction. The protein is Polyribonucleotide nucleotidyltransferase of Campylobacter concisus (strain 13826).